A 111-amino-acid chain; its full sequence is Ribonuclease P protein component (111 aa).

The protein belongs to the RnpA family. Consists of a catalytic RNA component (M1 or rnpB) and a protein subunit.

The enzyme catalyses Endonucleolytic cleavage of RNA, removing 5'-extranucleotides from tRNA precursor.. Its function is as follows. RNaseP catalyzes the removal of the 5'-leader sequence from pre-tRNA to produce the mature 5'-terminus. It can also cleave other RNA substrates such as 4.5S RNA. The protein component plays an auxiliary but essential role in vivo by binding to the 5'-leader sequence and broadening the substrate specificity of the ribozyme. This Clostridium botulinum (strain Okra / Type B1) protein is Ribonuclease P protein component.